We begin with the raw amino-acid sequence, 558 residues long: Transcription termination factor MTEF18, mitochondrial (558 aa).

A mitochondrion-targeting transit peptide spans 1 to 58 (MFMVRLKFASISHNFSTVAAKHRRVPSKYKSLAIGKAQQAITDYLHTTRSLSYTHAEQ).

The protein belongs to the mTERF family.

The protein localises to the mitochondrion. In terms of biological role, transcription termination factor involved in the regulation of mitochondrial-encoded gene expression. Essential for normal plant growth and development. This chain is Transcription termination factor MTEF18, mitochondrial, found in Arabidopsis thaliana (Mouse-ear cress).